A 261-amino-acid polypeptide reads, in one-letter code: uncharacterized protein (261 aa).

An N-terminal signal peptide occupies residues 1–22; it reads MGYSKRFALYISVMILIFAIAG. Cys-23 carries N-palmitoyl cysteine lipidation. The S-diacylglycerol cysteine moiety is linked to residue Cys-23.

This sequence belongs to the staphylococcal tandem lipoprotein family.

It is found in the cell membrane. This is an uncharacterized protein from Staphylococcus aureus (strain N315).